The chain runs to 189 residues: Protein CURLY FLAG LEAF 1 (189 aa).

The EAR motif lies at Thr50–Ser55. The 35-residue stretch at Leu57–Lys91 folds into the WW domain. The interval Arg90–Asp148 is disordered. 2 stretches are compositionally biased toward acidic residues: residues Ser108 to Ser121 and Glu135 to Asp148.

In terms of assembly, interacts with BHLH122/CFLAP1 and BHLH80/CFLAP2. Binds to HDG1. As to expression, mostly observed in roots, flowers and siliques. Expressed in cells differentiated from epidermal cells such as trichomes, stigmatic papillar cells and guard cells, as well as in tissues undergoing abscission and dehiscence.

Negatively regulates the cuticle development by interacting with the HD-ZIP IV transcription factor HDG1. The polypeptide is Protein CURLY FLAG LEAF 1 (Arabidopsis thaliana (Mouse-ear cress)).